A 65-amino-acid polypeptide reads, in one-letter code: UPF0337 protein gbs1203 (65 aa).

Over residues 1–12 (MSEEKFDAKVDK) the composition is skewed to basic and acidic residues. The segment at 1 to 29 (MSEEKFDAKVDKVSGSVKESVGKLTGDKE) is disordered.

The protein belongs to the UPF0337 (CsbD) family.

The chain is UPF0337 protein gbs1203 from Streptococcus agalactiae serotype III (strain NEM316).